The primary structure comprises 392 residues: Caveolae-associated protein 1 (392 aa).

Met1 bears the N-acetylmethionine mark. Positions 1 to 10 (MEDVTLHIVE) are enriched in basic and acidic residues. The disordered stretch occupies residues 1 to 45 (MEDVTLHIVERPYSGFPDASSEGPEPTQGEARATEEPSGTGSDEL). The interval 1–100 (MEDVTLHIVE…IQGELSKLGK (100 aa)) is required for homotrimerization and for interaction with CAVIN2 and CAVIN3. Residues Ser21 and Ser38 each carry the phosphoserine modification. Residue Thr40 is modified to Phosphothreonine. A phosphoserine mark is found at Ser42 and Ser48. The segment at 54-64 (VLVLSLLDKII) is nuclear export signal. The segment at 55–77 (LVLSLLDKIIGAVDQIQLTQAQL) is leucine-zipper 1. Lys118 is covalently cross-linked (Glycyl lysine isopeptide (Lys-Gly) (interchain with G-Cter in SUMO2)). Ser120 carries the post-translational modification Phosphoserine. A Glycyl lysine isopeptide (Lys-Gly) (interchain with G-Cter in SUMO2) cross-link involves residue Lys124. The segment at 138–154 (KKLEVNEAELLRRRNFK) is nuclear localization signal. Phosphotyrosine is present on Tyr158. Lys163 is covalently cross-linked (Glycyl lysine isopeptide (Lys-Gly) (interchain with G-Cter in SUMO1); alternate). Lys163 is covalently cross-linked (Glycyl lysine isopeptide (Lys-Gly) (interchain with G-Cter in SUMO2); alternate). A Glycyl lysine isopeptide (Lys-Gly) (interchain with G-Cter in SUMO2) cross-link involves residue Lys167. The segment at 168-188 (LSVSKSLKESEALPEKEGDEL) is leucine-zipper 2. 2 positions are modified to phosphoserine: Ser169 and Ser171. A Glycyl lysine isopeptide (Lys-Gly) (interchain with G-Cter in SUMO2) cross-link involves residue Lys172. Ser173 and Ser177 each carry phosphoserine. Residues 173 to 183 (SLKESEALPEK) are compositionally biased toward basic and acidic residues. Residues 173 to 197 (SLKESEALPEKEGDELGEGERPEDD) are disordered. Positions 184–197 (EGDELGEGERPEDD) are enriched in acidic residues. Thr198 carries the post-translational modification Phosphothreonine. Residues 201–284 (IELSSDEAVE…RMNKLGTRLV (84 aa)) adopt a coiled-coil conformation. Phosphoserine occurs at positions 204 and 205. The nuclear localization signal stretch occupies residues 235–251 (KKAFSKEKMEKTKVRTR). The tract at residues 259–299 (LKTKENLEKTRHTLEKRMNKLGTRLVPVERREKLKTSRDKL) is leucine-zipper 3. Ser302 is modified (phosphoserine). Thr304 is modified (phosphothreonine). A Phosphotyrosine modification is found at Tyr310. A Glycyl lysine isopeptide (Lys-Gly) (interchain with G-Cter in SUMO2) cross-link involves residue Lys328. A disordered region spans residues 347–367 (GPEDDEVGAERGEATDLLRGS). A phosphoserine mark is found at Ser367, Ser368, Ser381, Ser389, and Ser391.

Belongs to the CAVIN family. Component of the CAVIN complex composed of CAVIN1, CAVIN2, CAVIN3 and CAVIN4. Homotrimer. Interacts with LIPE in the adipocyte cytoplasm. Interacts with RNA polymerase I subunit POLR1A/RPA1. Interacts with TTF1. Binds the 3' end of pre-rRNA. Interacts with transcription factor ZNF148. Interacts with CAV1, CAVIN2 and CAVIN3. Interacts with CAVIN4. Post-translationally, phosphorylated. Present in active and inactive forms. Changes in phosphorylation pattern may alter activity. Phosphorylation at Tyr-158 is essential for its function in the regulation of the ribosomal transcriptional activity. In terms of processing, monoubiquitinated. Expressed in the heart, stomach, adipose tissue and lung (at protein level). Expressed in testis, kidney, muscle, liver, spleen and brain.

The protein resides in the membrane. It is found in the caveola. It localises to the cell membrane. Its subcellular location is the microsome. The protein localises to the endoplasmic reticulum. The protein resides in the cytoplasm. It is found in the cytosol. It localises to the mitochondrion. Its subcellular location is the nucleus. In terms of biological role, plays an important role in caveolae formation and organization. Essential for the formation of caveolae in all tissues. Core component of the CAVIN complex which is essential for recruitment of the complex to the caveolae in presence of calveolin-1 (CAV1). Essential for normal oligomerization of CAV1. Promotes ribosomal transcriptional activity in response to metabolic challenges in the adipocytes and plays an important role in the formation of the ribosomal transcriptional loop. Dissociates transcription complexes paused by DNA-bound TTF1, thereby releasing both RNA polymerase I and pre-RNA from the template. The caveolae biogenesis pathway is required for the secretion of proteins such as GASK1A. The sequence is that of Caveolae-associated protein 1 (Cavin1) from Mus musculus (Mouse).